The sequence spans 396 residues: Phosphoglycerate kinase (396 aa).

Substrate-binding positions include 21-23, arginine 36, 59-62, arginine 119, and arginine 156; these read DFN and HLGK. ATP contacts are provided by residues lysine 206, glycine 294, glutamate 325, and 352–355; that span reads GGDS.

Belongs to the phosphoglycerate kinase family. As to quaternary structure, monomer.

The protein resides in the cytoplasm. It catalyses the reaction (2R)-3-phosphoglycerate + ATP = (2R)-3-phospho-glyceroyl phosphate + ADP. It participates in carbohydrate degradation; glycolysis; pyruvate from D-glyceraldehyde 3-phosphate: step 2/5. The sequence is that of Phosphoglycerate kinase from Listeria monocytogenes serotype 4a (strain HCC23).